Reading from the N-terminus, the 75-residue chain is DNA-directed RNA polymerase subunit omega (75 aa).

This sequence belongs to the RNA polymerase subunit omega family. As to quaternary structure, in cyanobacteria the RNAP catalytic core is composed of 2 alpha, 1 beta, 1 beta', 1 gamma and 1 omega subunit. When a sigma factor is associated with the core the holoenzyme is formed, which can initiate transcription.

It carries out the reaction RNA(n) + a ribonucleoside 5'-triphosphate = RNA(n+1) + diphosphate. In terms of biological role, promotes RNA polymerase assembly. Latches the N- and C-terminal regions of the beta' subunit thereby facilitating its interaction with the beta and alpha subunits. The chain is DNA-directed RNA polymerase subunit omega from Picosynechococcus sp. (strain ATCC 27264 / PCC 7002 / PR-6) (Agmenellum quadruplicatum).